Here is a 290-residue protein sequence, read N- to C-terminus: 4-hydroxy-tetrahydrodipicolinate synthase (290 aa).

Thr-44 is a binding site for pyruvate. Tyr-132 acts as the Proton donor/acceptor in catalysis. The active-site Schiff-base intermediate with substrate is the Lys-160. Ile-202 provides a ligand contact to pyruvate.

This sequence belongs to the DapA family. In terms of assembly, homotetramer; dimer of dimers.

The protein resides in the cytoplasm. The enzyme catalyses L-aspartate 4-semialdehyde + pyruvate = (2S,4S)-4-hydroxy-2,3,4,5-tetrahydrodipicolinate + H2O + H(+). It participates in amino-acid biosynthesis; L-lysine biosynthesis via DAP pathway; (S)-tetrahydrodipicolinate from L-aspartate: step 3/4. In terms of biological role, catalyzes the condensation of (S)-aspartate-beta-semialdehyde [(S)-ASA] and pyruvate to 4-hydroxy-tetrahydrodipicolinate (HTPA). The protein is 4-hydroxy-tetrahydrodipicolinate synthase of Geobacter sulfurreducens (strain ATCC 51573 / DSM 12127 / PCA).